The following is a 594-amino-acid chain: Proteasome-associated ATPase (594 aa).

Residues 1 to 12 show a composition bias toward polar residues; that stretch reads MTETSANKPENT. A disordered region spans residues 1–20; that stretch reads MTETSANKPENTQAHEGRDY. Positions 18 to 71 form a coiled coil; it reads RDYSVLERQFNVLRDKLRNVDRQLAAATQNNTKMTTTLQSAKAEILRLKSALEK. Residue 282-287 coordinates ATP; it reads GCGKTL. Residues 593-594 form a docks into pockets in the proteasome alpha-ring region; sequence YL.

Belongs to the AAA ATPase family. Homohexamer. Assembles into a hexameric ring structure that caps the 20S proteasome core. Strongly interacts with the prokaryotic ubiquitin-like protein Pup through a hydrophobic interface; the interacting region of ARC lies in its N-terminal coiled-coil domain. There is one Pup binding site per ARC hexamer ring. Upon ATP-binding, the C-terminus of ARC interacts with the alpha-rings of the proteasome core, possibly by binding to the intersubunit pockets.

The protein operates within protein degradation; proteasomal Pup-dependent pathway. In terms of biological role, ATPase which is responsible for recognizing, binding, unfolding and translocation of pupylated proteins into the bacterial 20S proteasome core particle. May be essential for opening the gate of the 20S proteasome via an interaction with its C-terminus, thereby allowing substrate entry and access to the site of proteolysis. Thus, the C-termini of the proteasomal ATPase may function like a 'key in a lock' to induce gate opening and therefore regulate proteolysis. In Renibacterium salmoninarum (strain ATCC 33209 / DSM 20767 / JCM 11484 / NBRC 15589 / NCIMB 2235), this protein is Proteasome-associated ATPase.